The following is a 362-amino-acid chain: Adenosine deaminase (362 aa).

Zn(2+) contacts are provided by His19 and His21. Substrate is bound by residues His21, Asp23, and Gly181. His208 contacts Zn(2+). Residue Glu211 is the Proton donor of the active site. Asp300 contributes to the Zn(2+) binding site.

It belongs to the metallo-dependent hydrolases superfamily. Adenosine and AMP deaminases family. Adenosine deaminase subfamily. Zn(2+) is required as a cofactor.

The enzyme catalyses adenosine + H2O + H(+) = inosine + NH4(+). The catalysed reaction is 2'-deoxyadenosine + H2O + H(+) = 2'-deoxyinosine + NH4(+). Catalyzes the hydrolytic deamination of adenosine and 2-deoxyadenosine. The polypeptide is Adenosine deaminase (Mycolicibacterium gilvum (strain PYR-GCK) (Mycobacterium gilvum (strain PYR-GCK))).